Here is a 357-residue protein sequence, read N- to C-terminus: Holliday junction branch migration complex subunit RuvB (357 aa).

The large ATPase domain (RuvB-L) stretch occupies residues 4–195 (TDKLAAKAVS…FGIVARLEFY (192 aa)). ATP contacts are provided by residues Leu34, Arg35, Gly76, Lys79, Thr80, Thr81, 142–144 (EDY), Arg185, Tyr195, and Arg232. Thr80 lines the Mg(2+) pocket. Residues 196 to 266 (TPTELARIVT…VADAALAMLD (71 aa)) form a small ATPAse domain (RuvB-S) region. Residues 269-357 (AVGFDLMDRK…PARDLWDNNA (89 aa)) form a head domain (RuvB-H) region. Residues Arg305, Arg324, and Arg329 each contribute to the DNA site.

This sequence belongs to the RuvB family. Homohexamer. Forms an RuvA(8)-RuvB(12)-Holliday junction (HJ) complex. HJ DNA is sandwiched between 2 RuvA tetramers; dsDNA enters through RuvA and exits via RuvB. An RuvB hexamer assembles on each DNA strand where it exits the tetramer. Each RuvB hexamer is contacted by two RuvA subunits (via domain III) on 2 adjacent RuvB subunits; this complex drives branch migration. In the full resolvosome a probable DNA-RuvA(4)-RuvB(12)-RuvC(2) complex forms which resolves the HJ.

It is found in the cytoplasm. The enzyme catalyses ATP + H2O = ADP + phosphate + H(+). The RuvA-RuvB-RuvC complex processes Holliday junction (HJ) DNA during genetic recombination and DNA repair, while the RuvA-RuvB complex plays an important role in the rescue of blocked DNA replication forks via replication fork reversal (RFR). RuvA specifically binds to HJ cruciform DNA, conferring on it an open structure. The RuvB hexamer acts as an ATP-dependent pump, pulling dsDNA into and through the RuvAB complex. RuvB forms 2 homohexamers on either side of HJ DNA bound by 1 or 2 RuvA tetramers; 4 subunits per hexamer contact DNA at a time. Coordinated motions by a converter formed by DNA-disengaged RuvB subunits stimulates ATP hydrolysis and nucleotide exchange. Immobilization of the converter enables RuvB to convert the ATP-contained energy into a lever motion, pulling 2 nucleotides of DNA out of the RuvA tetramer per ATP hydrolyzed, thus driving DNA branch migration. The RuvB motors rotate together with the DNA substrate, which together with the progressing nucleotide cycle form the mechanistic basis for DNA recombination by continuous HJ branch migration. Branch migration allows RuvC to scan DNA until it finds its consensus sequence, where it cleaves and resolves cruciform DNA. The chain is Holliday junction branch migration complex subunit RuvB from Ralstonia nicotianae (strain ATCC BAA-1114 / GMI1000) (Ralstonia solanacearum).